A 629-amino-acid chain; its full sequence is tRNA uridine 5-carboxymethylaminomethyl modification enzyme MnmG (629 aa).

Residues 14-19, Val126, and Ser181 each bind FAD; that span reads GAGHAG. 273 to 287 serves as a coordination point for NAD(+); sequence GPRYCPSIEDKVVRF. Residue Gln370 coordinates FAD.

The protein belongs to the MnmG family. As to quaternary structure, homodimer. Heterotetramer of two MnmE and two MnmG subunits. FAD serves as cofactor.

It is found in the cytoplasm. In terms of biological role, NAD-binding protein involved in the addition of a carboxymethylaminomethyl (cmnm) group at the wobble position (U34) of certain tRNAs, forming tRNA-cmnm(5)s(2)U34. The polypeptide is tRNA uridine 5-carboxymethylaminomethyl modification enzyme MnmG (Geobacillus thermodenitrificans (strain NG80-2)).